The following is a 143-amino-acid chain: Nucleoside diphosphate kinase (143 aa).

ATP-binding residues include lysine 11, phenylalanine 59, arginine 87, threonine 93, arginine 104, and asparagine 114. Catalysis depends on histidine 117, which acts as the Pros-phosphohistidine intermediate.

The protein belongs to the NDK family. In terms of assembly, homotetramer. It depends on Mg(2+) as a cofactor.

The protein resides in the cytoplasm. It carries out the reaction a 2'-deoxyribonucleoside 5'-diphosphate + ATP = a 2'-deoxyribonucleoside 5'-triphosphate + ADP. The enzyme catalyses a ribonucleoside 5'-diphosphate + ATP = a ribonucleoside 5'-triphosphate + ADP. In terms of biological role, major role in the synthesis of nucleoside triphosphates other than ATP. The ATP gamma phosphate is transferred to the NDP beta phosphate via a ping-pong mechanism, using a phosphorylated active-site intermediate. This chain is Nucleoside diphosphate kinase, found in Shewanella pealeana (strain ATCC 700345 / ANG-SQ1).